Here is a 331-residue protein sequence, read N- to C-terminus: Ketol-acid reductoisomerase (NADP(+)) (331 aa).

In terms of domain architecture, KARI N-terminal Rossmann spans 2–181; that stretch reads TKVYYEDAVK…GATRAGVIET (180 aa). Residues 25–28, arginine 48, serine 52, and 82–85 contribute to the NADP(+) site; these read YGSQ and DETQ. Residue histidine 107 is part of the active site. NADP(+) is bound at residue glycine 133. The region spanning 182–327 is the KARI C-terminal knotted domain; it reads TFKEETETDL…AELREMMPFV (146 aa). 4 residues coordinate Mg(2+): aspartate 190, glutamate 194, glutamate 226, and glutamate 230. Serine 251 provides a ligand contact to substrate.

It belongs to the ketol-acid reductoisomerase family. Mg(2+) serves as cofactor.

It catalyses the reaction (2R)-2,3-dihydroxy-3-methylbutanoate + NADP(+) = (2S)-2-acetolactate + NADPH + H(+). The catalysed reaction is (2R,3R)-2,3-dihydroxy-3-methylpentanoate + NADP(+) = (S)-2-ethyl-2-hydroxy-3-oxobutanoate + NADPH + H(+). It participates in amino-acid biosynthesis; L-isoleucine biosynthesis; L-isoleucine from 2-oxobutanoate: step 2/4. It functions in the pathway amino-acid biosynthesis; L-valine biosynthesis; L-valine from pyruvate: step 2/4. Its function is as follows. Involved in the biosynthesis of branched-chain amino acids (BCAA). Catalyzes an alkyl-migration followed by a ketol-acid reduction of (S)-2-acetolactate (S2AL) to yield (R)-2,3-dihydroxy-isovalerate. In the isomerase reaction, S2AL is rearranged via a Mg-dependent methyl migration to produce 3-hydroxy-3-methyl-2-ketobutyrate (HMKB). In the reductase reaction, this 2-ketoacid undergoes a metal-dependent reduction by NADPH to yield (R)-2,3-dihydroxy-isovalerate. The protein is Ketol-acid reductoisomerase (NADP(+)) of Listeria monocytogenes serovar 1/2a (strain ATCC BAA-679 / EGD-e).